The following is a 564-amino-acid chain: Proline--tRNA ligase (564 aa).

Belongs to the class-II aminoacyl-tRNA synthetase family. ProS type 1 subfamily. In terms of assembly, homodimer.

The protein localises to the cytoplasm. The catalysed reaction is tRNA(Pro) + L-proline + ATP = L-prolyl-tRNA(Pro) + AMP + diphosphate. In terms of biological role, catalyzes the attachment of proline to tRNA(Pro) in a two-step reaction: proline is first activated by ATP to form Pro-AMP and then transferred to the acceptor end of tRNA(Pro). As ProRS can inadvertently accommodate and process non-cognate amino acids such as alanine and cysteine, to avoid such errors it has two additional distinct editing activities against alanine. One activity is designated as 'pretransfer' editing and involves the tRNA(Pro)-independent hydrolysis of activated Ala-AMP. The other activity is designated 'posttransfer' editing and involves deacylation of mischarged Ala-tRNA(Pro). The misacylated Cys-tRNA(Pro) is not edited by ProRS. In Xylella fastidiosa (strain Temecula1 / ATCC 700964), this protein is Proline--tRNA ligase.